Consider the following 527-residue polypeptide: Amine oxidase [flavin-containing] A (527 aa).

Methionine 1 carries the post-translational modification N-acetylmethionine. At 1–497 (MENQEKASIA…HTFWERNLPS (497 aa)) the chain is on the cytoplasmic side. Serine 383 bears the Phosphoserine mark. At cysteine 406 the chain carries S-8alpha-FAD cysteine. The helical; Anchor for type IV membrane protein transmembrane segment at 498 to 518 (VSGLLKIIGFSTSVTALGFVL) threads the bilayer. Residues 519 to 527 (YKYKLLPRS) are Mitochondrial intermembrane-facing. The segment at 520 to 522 (KYK) is interaction with membrane phospholipid headgroups.

Belongs to the flavin monoamine oxidase family. In terms of assembly, monomer, homo- or heterodimer (containing two subunits of similar size). Each subunit contains a covalently bound flavin. Enzymatically active as monomer. The cofactor is FAD.

The protein localises to the mitochondrion outer membrane. The catalysed reaction is a secondary aliphatic amine + O2 + H2O = a primary amine + an aldehyde + H2O2. It catalyses the reaction a primary methyl amine + O2 + H2O = an aldehyde + H2O2 + NH4(+). It carries out the reaction (R)-adrenaline + O2 + H2O = (R)-3,4-dihydroxymandelaldehyde + methylamine + H2O2. The enzyme catalyses dopamine + O2 + H2O = 3,4-dihydroxyphenylacetaldehyde + H2O2 + NH4(+). The catalysed reaction is tyramine + O2 + H2O = (4-hydroxyphenyl)acetaldehyde + H2O2 + NH4(+). It catalyses the reaction (R)-noradrenaline + O2 + H2O = (R)-3,4-dihydroxymandelaldehyde + H2O2 + NH4(+). It carries out the reaction serotonin + O2 + H2O = (5-hydroxyindol-3-yl)acetaldehyde + H2O2 + NH4(+). The enzyme catalyses kynuramine + O2 + H2O = 3-(2-aminophenyl)-3-oxopropanal + H2O2 + NH4(+). The catalysed reaction is tryptamine + O2 + H2O = indole-3-acetaldehyde + H2O2 + NH4(+). It catalyses the reaction 2-phenylethylamine + O2 + H2O = 2-phenylacetaldehyde + H2O2 + NH4(+). Functionally, catalyzes the oxidative deamination of primary and some secondary amine such as neurotransmitters, with concomitant reduction of oxygen to hydrogen peroxide and has important functions in the metabolism of neuroactive and vasoactive amines in the central nervous system and peripheral tissues. Preferentially oxidizes serotonin. Also catalyzes the oxidative deamination of kynuramine to 3-(2-aminophenyl)-3-oxopropanal that can spontaneously condense to 4-hydroxyquinoline. The polypeptide is Amine oxidase [flavin-containing] A (Pongo abelii (Sumatran orangutan)).